Consider the following 433-residue polypeptide: Glucose-6-phosphate isomerase (433 aa).

Catalysis depends on E285, which acts as the Proton donor. Catalysis depends on residues H306 and K421.

It belongs to the GPI family.

It localises to the cytoplasm. The catalysed reaction is alpha-D-glucose 6-phosphate = beta-D-fructose 6-phosphate. The protein operates within carbohydrate biosynthesis; gluconeogenesis. It participates in carbohydrate degradation; glycolysis; D-glyceraldehyde 3-phosphate and glycerone phosphate from D-glucose: step 2/4. Its function is as follows. Catalyzes the reversible isomerization of glucose-6-phosphate to fructose-6-phosphate. This is Glucose-6-phosphate isomerase from Mycoplasma mobile (strain ATCC 43663 / 163K / NCTC 11711) (Mesomycoplasma mobile).